Consider the following 248-residue polypeptide: Exosome complex component Rrp41 (248 aa).

It belongs to the RNase PH family. Rrp41 subfamily. Component of the archaeal exosome complex. Forms a hexameric ring-like arrangement composed of 3 Rrp41-Rrp42 heterodimers. The hexameric ring associates with a trimer of Rrp4 and/or Csl4 subunits.

It localises to the cytoplasm. In terms of biological role, catalytic component of the exosome, which is a complex involved in RNA degradation. Has 3'-&gt;5' exoribonuclease activity. Can also synthesize heteromeric RNA-tails. This chain is Exosome complex component Rrp41, found in Thermoplasma volcanium (strain ATCC 51530 / DSM 4299 / JCM 9571 / NBRC 15438 / GSS1).